Here is a 351-residue protein sequence, read N- to C-terminus: Lipopolysaccharide core biosynthesis mannosyltransferase LpsB (351 aa).

This sequence belongs to the glycosyltransferase group 1 family. Glycosyltransferase 4 subfamily.

The protein operates within bacterial outer membrane biogenesis; LPS core biosynthesis. In terms of biological role, acts at transfer of mannose group to a 3-deoxy-D-mono octulonic acid (KDO) via an alpha-1,5 linkage. This is Lipopolysaccharide core biosynthesis mannosyltransferase LpsB (lpsB) from Rhizobium meliloti (strain 1021) (Ensifer meliloti).